Here is a 602-residue protein sequence, read N- to C-terminus: Sodium- and chloride-dependent GABA transporter 2 (602 aa).

Over 1–40 (MDSRVSGTTSNGETKPVCPGLEKAAEDGALQREQWSNKME) the chain is Cytoplasmic. 3 consecutive transmembrane segments (helical) span residues 41-61 (FLLS…FPYL), 68-88 (GAFF…VFLL), and 121-141 (IVTL…FYLF). At 142–206 (SSFTIDLPWG…GIQHLGALRW (65 aa)) the chain is on the extracellular side. The cysteines at positions 153 and 162 are disulfide-linked. Residues Asn169 and Asn173 are each glycosylated (N-linked (GlcNAc...) asparagine). Helical transmembrane passes span 207–227 (ELAL…WKGV) and 233–253 (VVYF…IRGV). N-linked (GlcNAc...) asparagine glycosylation occurs at Asn269. 7 consecutive transmembrane segments (helical) span residues 282 to 302 (AGTQ…ALGS), 319 to 339 (FLNS…LGFM), 366 to 386 (VVML…VVLL), 418 to 438 (VLIL…LTEG), 453 to 473 (GMCL…AYGA), 490 to 510 (PLIK…TFLF), and 528 to 548 (WWGD…IPAW). Residues 549 to 602 (SCYKLSTLKGSFRERVRQLLCPAKDLPQGHREGPSAPATPRTSLLILTELEPHH) are Cytoplasmic-facing. Residue Thr587 is modified to Phosphothreonine. Ser591 carries the phosphoserine modification.

It belongs to the sodium:neurotransmitter symporter (SNF) (TC 2.A.22) family. SLC6A13 subfamily.

The protein resides in the cell membrane. The protein localises to the basolateral cell membrane. The enzyme catalyses 4-aminobutanoate(out) + chloride(out) + 2 Na(+)(out) = 4-aminobutanoate(in) + chloride(in) + 2 Na(+)(in). It catalyses the reaction taurine(out) + chloride(out) + 2 Na(+)(out) = taurine(in) + chloride(in) + 2 Na(+)(in). It carries out the reaction beta-alanine(out) + chloride(out) + 2 Na(+)(out) = beta-alanine(in) + chloride(in) + 2 Na(+)(in). The catalysed reaction is hypotaurine(out) + chloride(out) + 2 Na(+)(out) = hypotaurine(in) + chloride(in) + 2 Na(+)(in). Its function is as follows. Mediates sodium- and chloride-dependent transport of gamma-aminobutyric acid (GABA). Can also mediate transport of beta-alanine, taurine and hypotaurine. The sequence is that of Sodium- and chloride-dependent GABA transporter 2 (SLC6A13) from Bos taurus (Bovine).